Consider the following 311-residue polypeptide: Pyrimidine-specific ribonucleoside hydrolase RihA (311 aa).

His240 is an active-site residue.

The protein belongs to the IUNH family. RihA subfamily.

Functionally, hydrolyzes cytidine or uridine to ribose and cytosine or uracil, respectively. The sequence is that of Pyrimidine-specific ribonucleoside hydrolase RihA from Salmonella choleraesuis (strain SC-B67).